The primary structure comprises 1014 residues: MPGKLKVKIVAGRHLPVMDRASDLTDAFVEVKFGNTTFKTDVYHKSLNPQWNSEWFKFEVDDEDLQDEPLQITVLDHDTYSANDAIGKVYIDIDPLLYTEAATVISGWFPIYDTIHGIRGEISVLVKVDLFNDLNRFRQSSCGVKFFCTTSIPKSYRAVVIHGFVEELVVNEDPEYQWIDRIRTPRASNEARQRLISLMSGELQRKIGLKVLEMRGNAVVGYLQCFDLEGESGLVVRAIGTACTLDKLSNPAPFAPSCNSPCKEIKEAPFIEELNPNTHSSGPSTPLKNQTYSFSPSKSFSRQSSSSDTDLSLTPKTGMGSGSAGRDGGAFKALLRQQTQSALEQREFPFFTLTSFPPTFLVHVGGVVSARSVKLLDRIHNPDEPETRDAWWAEIRQEIKSHARALGCHAVVGYSESTSICEEVCILSASGTAAVLNPKFLQEASAEGCLEQRSEETSPTPCAFCHIPYDELNMPFPANLTYCCACRKQKVPDVLFTTIDLPSDAPVIGKGCLIQARLCRLKKKSQAEANATVISSLLPFMEYELHTQLMNKLKLKGMNGLFGLRIQITVGESMLLGLASATGVYLSSLPTPGGIQIAGKTPSEGSYDQHISHMQKKINETIAKNKDLYEINPPEILEETVGSPIPEPRQRTRLLRSQSESSDEAAELDLSHGKKDAFVLEIDDTDAMEDVHSLLTDVAPPPGFYSCNTEIMPGINNWIPNIQMFSSVRVIRLNSTNLTNQTLNKNFNDLCENLLKSLYFKLRSMVPCCLCHVNFTVAVPEEESIQVAVTAVAITFDKQQALQVPKPRPEKPQPRGSDPEEQLQFPLELSSDSPGPSTFSPARDVPERGGSPAGATQRAVSLDKSSPLAESHLRHRGGGGGAIPSVTVVKMTPLSFIPGAKITKFLGIINMFFIRETTSLREEGGVSGFLHAFICEVFAMVRAHVAALGGNAVVSYIMKQCVFMENANKNQAQCLINVSGDAVIFISESEVEAGPGQPTAPGPQSAGVGGDSAT.

The 109-residue stretch at 1–109 (MPGKLKVKIV…EAATVISGWF (109 aa)) folds into the C2 domain. Ca(2+) contacts are provided by Asp-19, Asp-26, Asp-76, Asp-78, Ser-81, and Asp-84. Disordered regions lie at residues 274-328 (LNPN…GRDG), 639-669 (ETVG…AELD), 801-878 (ALQV…HRGG), and 992-1014 (EAGP…DSAT). Over residues 275–292 (NPNTHSSGPSTPLKNQTY) the composition is skewed to polar residues. Low complexity predominate over residues 293-318 (SFSPSKSFSRQSSSSDTDLSLTPKTG). A compositionally biased stretch (gly residues) spans 319–328 (MGSGSAGRDG). The span at 830-840 (SSDSPGPSTFS) shows a compositional bias: polar residues. Over residues 993-1006 (AGPGQPTAPGPQSA) the composition is skewed to low complexity.

Ca(2+) is required as a cofactor.

Its subcellular location is the cytoplasmic vesicle membrane. The protein resides in the cytoplasm. It is found in the cell cortex. It localises to the cell membrane. The protein localises to the cell projection. Its subcellular location is the ruffle. Its function is as follows. May be required for insulin-stimulated glucose transport and glucose transporter SLC2A4/GLUT4 translocation from intracellular glucose storage vesicle (GSV) to the plasma membrane (PM) in adipocytes. May bind phospholipid membranes in a calcium-dependent manner. The sequence is that of C2 domain-containing protein 5 (c2cd5) from Xenopus tropicalis (Western clawed frog).